The following is a 159-amino-acid chain: Cyanate hydratase (159 aa).

Active-site residues include Arg-103, Glu-106, and Ser-129.

It belongs to the cyanase family.

It carries out the reaction cyanate + hydrogencarbonate + 3 H(+) = NH4(+) + 2 CO2. Catalyzes the reaction of cyanate with bicarbonate to produce ammonia and carbon dioxide. In Blastomyces gilchristii (strain SLH14081) (Blastomyces dermatitidis), this protein is Cyanate hydratase.